Consider the following 154-residue polypeptide: Putative antiporter subunit mnhG2 (154 aa).

3 helical membrane-spanning segments follow: residues Ile-11–Val-31, Val-51–Val-71, and Arg-72–Ser-92.

This sequence belongs to the CPA3 antiporters (TC 2.A.63) subunit G family. As to quaternary structure, may form a heterooligomeric complex that consists of seven subunits: mnhA2, mnhB2, mnhC2, mnhD2, mnhE2, mnhF2 and mnhG2.

The protein resides in the cell membrane. This Staphylococcus epidermidis (strain ATCC 35984 / DSM 28319 / BCRC 17069 / CCUG 31568 / BM 3577 / RP62A) protein is Putative antiporter subunit mnhG2 (mnhG2).